The primary structure comprises 304 residues: Putative S-adenosyl-L-methionine-dependent methyltransferase MAV_4236 (304 aa).

Residues aspartate 129 and aspartate 158–leucine 159 each bind S-adenosyl-L-methionine.

This sequence belongs to the UPF0677 family.

Its function is as follows. Exhibits S-adenosyl-L-methionine-dependent methyltransferase activity. The chain is Putative S-adenosyl-L-methionine-dependent methyltransferase MAV_4236 from Mycobacterium avium (strain 104).